Here is a 413-residue protein sequence, read N- to C-terminus: Elongation factor 1-alpha (413 aa).

The tr-type G domain maps to 5-211 (KEHMNLAFIG…DDLEAPEKPV (207 aa)). The G1 stretch occupies residues 14-21 (GHVDHGKS). A GTP-binding site is contributed by 14 to 21 (GHVDHGKS). Ser-21 provides a ligand contact to Mg(2+). Residues 60–64 (GVTID) form a G2 region. Positions 81 to 84 (DCPG) are G3. GTP contacts are provided by residues 81–85 (DCPGH) and 136–139 (NKMD). Positions 136-139 (NKMD) are G4. The interval 175 to 177 (SAF) is G5.

Belongs to the TRAFAC class translation factor GTPase superfamily. Classic translation factor GTPase family. EF-Tu/EF-1A subfamily.

It is found in the cytoplasm. It carries out the reaction GTP + H2O = GDP + phosphate + H(+). Its function is as follows. GTP hydrolase that promotes the GTP-dependent binding of aminoacyl-tRNA to the A-site of ribosomes during protein biosynthesis. The protein is Elongation factor 1-alpha of Methanothermobacter thermautotrophicus (strain ATCC 29096 / DSM 1053 / JCM 10044 / NBRC 100330 / Delta H) (Methanobacterium thermoautotrophicum).